Consider the following 1102-residue polypeptide: Putative ISWI chromatin-remodeling complex subunit YPL216W (1102 aa).

The WAC domain occupies 23-131 (ETPWVIKESS…DTVCLKTIQK (109 aa)). The tract at residues 271–301 (ELYTPLTIPPESDVEPADWKETSETSETSET) is disordered. Residues 375–435 (QFPTERLLVV…FLKTYNSKGS (61 aa)) form the DDT domain. Residues 673 to 743 (CNGIRLKLDS…EDIAFLEAKL (71 aa)) adopt a coiled-coil conformation.

The protein localises to the nucleus. Its function is as follows. May be required for the activity of an ISWI chromatin-remodeling complex. The polypeptide is Putative ISWI chromatin-remodeling complex subunit YPL216W (Saccharomyces cerevisiae (strain ATCC 204508 / S288c) (Baker's yeast)).